A 215-amino-acid polypeptide reads, in one-letter code: Pyrrolidone-carboxylate peptidase (215 aa).

Residues Glu80, Cys143, and His167 contribute to the active site.

It belongs to the peptidase C15 family. In terms of assembly, homotetramer.

The protein resides in the cytoplasm. It catalyses the reaction Release of an N-terminal pyroglutamyl group from a polypeptide, the second amino acid generally not being Pro.. Removes 5-oxoproline from various penultimate amino acid residues except L-proline. The chain is Pyrrolidone-carboxylate peptidase from Yersinia pestis bv. Antiqua (strain Antiqua).